The primary structure comprises 567 residues: UPF0313 protein CTN_0332 (567 aa).

In terms of domain architecture, Radical SAM core spans 288–560 (KAIETVKFSI…NKMKENVLFK (273 aa)). The [4Fe-4S] cluster site is built by cysteine 303, cysteine 307, and cysteine 310.

Belongs to the UPF0313 family. Requires [4Fe-4S] cluster as cofactor.

The polypeptide is UPF0313 protein CTN_0332 (Thermotoga neapolitana (strain ATCC 49049 / DSM 4359 / NBRC 107923 / NS-E)).